The chain runs to 35 residues: Potassium channel toxin alpha-KTx 6.1 (35 aa).

Intrachain disulfides connect C4/C25, C10/C30, C14/C32, and C20/C35.

It belongs to the short scorpion toxin superfamily. Potassium channel inhibitor family. Alpha-KTx 06 subfamily. Expressed by the venom gland.

It localises to the secreted. Potently and reversibly inhibits the insect voltage-gated Shaker (Sh) potassium channel (isoform alpha (B)), the mammalian voltage-gated potassium channels Kv1.2/KCNA2 (IC(50)=0.44 nM), and the calcium-activated potassium channel KCa2.3/KCNN3 (Kd=330 nM). Its effect on Kv1.3/KCNA3 is controversial, since this channel is voltage-independently inhibited in PubMed:9464266, but is not affected in PubMed:10931199. Furthermore, this toxin competes with apamin (a small conductance calcium-activated potassium channel inhibitor) for binding to rat brain synaptosomes. This Pandinus imperator (Emperor scorpion) protein is Potassium channel toxin alpha-KTx 6.1.